The following is a 243-amino-acid chain: Phosphatidylserine decarboxylase proenzyme (243 aa).

Residue Ser-212 is the Schiff-base intermediate with substrate; via pyruvic acid of the active site. Ser-212 carries the post-translational modification Pyruvic acid (Ser); by autocatalysis.

Belongs to the phosphatidylserine decarboxylase family. PSD-A subfamily. In terms of assembly, heterodimer of a large membrane-associated beta subunit and a small pyruvoyl-containing alpha subunit. Pyruvate is required as a cofactor. Is synthesized initially as an inactive proenzyme. Formation of the active enzyme involves a self-maturation process in which the active site pyruvoyl group is generated from an internal serine residue via an autocatalytic post-translational modification. Two non-identical subunits are generated from the proenzyme in this reaction, and the pyruvate is formed at the N-terminus of the alpha chain, which is derived from the carboxyl end of the proenzyme. The post-translation cleavage follows an unusual pathway, termed non-hydrolytic serinolysis, in which the side chain hydroxyl group of the serine supplies its oxygen atom to form the C-terminus of the beta chain, while the remainder of the serine residue undergoes an oxidative deamination to produce ammonia and the pyruvoyl prosthetic group on the alpha chain.

The protein localises to the cell membrane. The catalysed reaction is a 1,2-diacyl-sn-glycero-3-phospho-L-serine + H(+) = a 1,2-diacyl-sn-glycero-3-phosphoethanolamine + CO2. It participates in phospholipid metabolism; phosphatidylethanolamine biosynthesis; phosphatidylethanolamine from CDP-diacylglycerol: step 2/2. Its function is as follows. Catalyzes the formation of phosphatidylethanolamine (PtdEtn) from phosphatidylserine (PtdSer). The sequence is that of Phosphatidylserine decarboxylase proenzyme from Mycobacterium leprae (strain Br4923).